A 117-amino-acid chain; its full sequence is Virion membrane protein A21 (117 aa).

The chain crosses the membrane as a helical; Signal-anchor for type III membrane protein span at residues methionine 1 to alanine 21. Topologically, residues isoleucine 22–threonine 117 are virion surface.

Belongs to the chordopoxvirinae A21 family. In terms of assembly, envelope protein part of a stable entry-fusion complex (EFC) which is at least composed of proteins A16, A21, A28, G3, G9, H2, J5, and L5. Formation of the viral membrane is necessary for the assembly of the complex. Post-translationally, contains two intramolecular disulfide bonds. They are created by the viral disulfide bond formation pathway, a poxvirus-specific pathway that operates on the cytoplasmic side of the MV membranes.

The protein resides in the virion membrane. In terms of biological role, envelope protein part of the entry-fusion complex responsible for the virus membrane fusion with host cell membrane during virus entry. The protein is Virion membrane protein A21 of Vaccinia virus (strain Ankara) (VACV).